Consider the following 180-residue polypeptide: Oligoribonuclease (180 aa).

An Exonuclease domain is found at 7 to 170 (LIWIDLEMTG…SDIQDSIDEL (164 aa)). The active site involves Tyr128.

Belongs to the oligoribonuclease family.

It is found in the cytoplasm. Its function is as follows. 3'-to-5' exoribonuclease specific for small oligoribonucleotides. This Ruthia magnifica subsp. Calyptogena magnifica protein is Oligoribonuclease.